A 586-amino-acid chain; its full sequence is MLRAGRYSKASSVLRAVGGKRPSVCMASRVLTRLYSNGKEDDQVASSSSPSSKPWYLQGTGKPEIDVTSPFVGKIKLPATPVPDTVVNVTEYMRDKLGVTDITCFNTHEAHRPCVKNGYVILGCVKSTRHGARSMIELMRFLKTEYGVLPQKEGGISVQELRKRQKRLQRKGNLTSASAELAGESDWYLIDSKLYDGNGSGVFVHLLTKEKREDLNLEGLYCTSEERGLYQKKVLSPSNDHLPNDDDDNVLAGLKRLALQNSRRYYSSTSSATADYARSSLQGGSNMENSDAPLFSLVDSLAQLPETEELDPQEWIRSLDAKWAFIDLTEKHWQARWLMYRLLYVNRLHALQRAQDGDSANLDHLKRDLTFCYKTLLEYFTLKQAMNGRLNKEELVGMLDIMLTQKELNGGYSKLVKHNRVLQQLLDHYKFHEPELFRDEQITIRTLKLMVSSQAKLNVLSEFVRFLRDTGYTNRNVAIKCIEILAEAKEWRELKTFMFRDTTAALLSDPMVWAHFLRSILAHGEPLLWRSLIDDGSILWLVRCGVDVRACEELHSALLELFQRAGYDAVKADSLLRDYIQDGACS.

A mitochondrion-targeting transit peptide spans 1-35 (MLRAGRYSKASSVLRAVGGKRPSVCMASRVLTRLY). The disordered stretch occupies residues 39-59 (KEDDQVASSSSPSSKPWYLQG).

Belongs to the ATP25 family.

It localises to the mitochondrion inner membrane. Functionally, probable mitochondrial mRNA stabilization factor. The protein is ATPase synthesis protein 25, mitochondrial (ATP25) of Eremothecium gossypii (strain ATCC 10895 / CBS 109.51 / FGSC 9923 / NRRL Y-1056) (Yeast).